Reading from the N-terminus, the 547-residue chain is Chaperonin GroEL (547 aa).

Residues 30–33 (TLGP), Lys51, 87–91 (DGTTT), Gly415, and Asp496 contribute to the ATP site.

Belongs to the chaperonin (HSP60) family. As to quaternary structure, forms a cylinder of 14 subunits composed of two heptameric rings stacked back-to-back. Interacts with the co-chaperonin GroES.

The protein resides in the cytoplasm. The catalysed reaction is ATP + H2O + a folded polypeptide = ADP + phosphate + an unfolded polypeptide.. Together with its co-chaperonin GroES, plays an essential role in assisting protein folding. The GroEL-GroES system forms a nano-cage that allows encapsulation of the non-native substrate proteins and provides a physical environment optimized to promote and accelerate protein folding. This chain is Chaperonin GroEL, found in Actinobacillus pleuropneumoniae serotype 7 (strain AP76).